We begin with the raw amino-acid sequence, 450 residues long: UDP-N-acetylmuramoylalanine--D-glutamate ligase (450 aa).

118 to 124 (GSNAKST) lines the ATP pocket.

This sequence belongs to the MurCDEF family.

The protein resides in the cytoplasm. It catalyses the reaction UDP-N-acetyl-alpha-D-muramoyl-L-alanine + D-glutamate + ATP = UDP-N-acetyl-alpha-D-muramoyl-L-alanyl-D-glutamate + ADP + phosphate + H(+). It functions in the pathway cell wall biogenesis; peptidoglycan biosynthesis. In terms of biological role, cell wall formation. Catalyzes the addition of glutamate to the nucleotide precursor UDP-N-acetylmuramoyl-L-alanine (UMA). This is UDP-N-acetylmuramoylalanine--D-glutamate ligase from Pseudomonas putida (strain ATCC 47054 / DSM 6125 / CFBP 8728 / NCIMB 11950 / KT2440).